Here is an 87-residue protein sequence, read N- to C-terminus: Large ribosomal subunit protein bL27 (87 aa).

The disordered stretch occupies residues 1–22; that stretch reads MAHKKAGGSSRNGRDSQGQRRG.

The protein belongs to the bacterial ribosomal protein bL27 family.

The chain is Large ribosomal subunit protein bL27 from Nitratidesulfovibrio vulgaris (strain DP4) (Desulfovibrio vulgaris).